The chain runs to 580 residues: Probable RNA-binding protein CG14230 (580 aa).

Residues 4 to 81 form the RRM domain; it reads TRFFLADLPT…EKLRVSLAKE (78 aa). Residues 89-100 show a composition bias toward basic and acidic residues; it reads REREENQRREQG. Disordered regions lie at residues 89–131 and 173–211; these read RERE…EDEE and QHRK…KSAI. Residues 110–120 are compositionally biased toward polar residues; it reads PSSQLLVQSGQ. Position 231 is a phosphoserine (Ser231). 2 stretches are compositionally biased toward acidic residues: residues 254-263 and 298-313; these read ENDDDEEEEQ and NEEE…EPEE. 3 disordered regions span residues 254–316, 333–395, and 463–520; these read ENDD…ESER, SAND…SAVS, and PFSY…IPRN. Composition is skewed to basic and acidic residues over residues 348 to 358 and 365 to 377; these read LRFDPAKEGHQ and QPKE…EETS. Polar residues predominate over residues 386–395; sequence AGNSQASAVS. Residue Ser468 is modified to Phosphoserine. Phosphothreonine is present on Thr475.

The polypeptide is Probable RNA-binding protein CG14230 (Drosophila melanogaster (Fruit fly)).